The following is a 208-amino-acid chain: MPPKRQNTETRKARQNRARRSRQQALAKLAREFSGLSMSVERSPSTSWADITESESRLKLIPGFTATEVTFDPSLTFGTHTGFATAERSLTVPDALLESPNLRLNRVAVVVLLDPTVPEAHKFWCALGDRWVAPSVGSFPSNAVRITGREGKGHVIYHYPGKTVEHLAKLRVYLFATDYAIVGNNSPVATVKIFVEHEKIGQAEYIPL.

A compositionally biased stretch (basic and acidic residues) spans 1-12 (MPPKRQNTETRK). Residues 1-23 (MPPKRQNTETRKARQNRARRSRQ) are disordered. Basic residues predominate over residues 13-22 (ARQNRARRSR).

It localises to the virion. Functionally, capsid protein self-assembles to form a quasi spherical capsid, about 25-35 nm. This Pelargonium zonate spot virus (isolate Tomato/Italy/1982) (PZSV) protein is Capsid protein.